A 288-amino-acid chain; its full sequence is ATP synthase gamma chain (288 aa).

This sequence belongs to the ATPase gamma chain family. F-type ATPases have 2 components, CF(1) - the catalytic core - and CF(0) - the membrane proton channel. CF(1) has five subunits: alpha(3), beta(3), gamma(1), delta(1), epsilon(1). CF(0) has three main subunits: a, b and c.

It localises to the cell inner membrane. Its function is as follows. Produces ATP from ADP in the presence of a proton gradient across the membrane. The gamma chain is believed to be important in regulating ATPase activity and the flow of protons through the CF(0) complex. The sequence is that of ATP synthase gamma chain from Aliivibrio salmonicida (strain LFI1238) (Vibrio salmonicida (strain LFI1238)).